The chain runs to 252 residues: 14-3-3 protein homolog 1 (252 aa).

The protein belongs to the 14-3-3 family.

The protein is 14-3-3 protein homolog 1 of Schistosoma mansoni (Blood fluke).